Reading from the N-terminus, the 938-residue chain is Translation initiation factor IF-2 (938 aa).

A compositionally biased stretch (basic and acidic residues) spans 57 to 205; sequence DKSKKVASKE…PKSEETKSEE (149 aa). Residues 57 to 350 form a disordered region; the sequence is DKSKKVASKE…RSADDLAQQE (294 aa). Acidic residues predominate over residues 206–215; it reads TTEGGESEEK. Residues 248–259 are compositionally biased toward basic and acidic residues; that stretch reads KKEEKKEDDKKD. Composition is skewed to basic residues over residues 260–270 and 285–296; these read KDRRKKRRRRI and GAKKGGRTRSKP. Over residues 297–319 the composition is skewed to basic and acidic residues; sequence ITKEEPTEEEVQKQVRETLEKLQ. The span at 323–333 shows a compositional bias: basic residues; the sequence is SKGKGAKYRRQ. Positions 334 to 344 are enriched in basic and acidic residues; that stretch reads KRDEHRQRSAD. Residues 434–602 enclose the tr-type G domain; that stretch reads TRAPIVTVMG…KVLLEAEILE (169 aa). Residues 443-450 are G1; sequence GHVDHGKT. 443 to 450 contributes to the GTP binding site; sequence GHVDHGKT. A G2 region spans residues 468 to 472; the sequence is GITQH. Positions 490–493 are G3; sequence DTPG. GTP contacts are provided by residues 490 to 494 and 544 to 547; these read DTPGH and NKSD. Residues 544–547 are G4; sequence NKSD. A G5 region spans residues 580–582; it reads SAK.

This sequence belongs to the TRAFAC class translation factor GTPase superfamily. Classic translation factor GTPase family. IF-2 subfamily.

Its subcellular location is the cytoplasm. Its function is as follows. One of the essential components for the initiation of protein synthesis. Protects formylmethionyl-tRNA from spontaneous hydrolysis and promotes its binding to the 30S ribosomal subunits. Also involved in the hydrolysis of GTP during the formation of the 70S ribosomal complex. The chain is Translation initiation factor IF-2 from Christiangramia forsetii (strain DSM 17595 / CGMCC 1.15422 / KT0803) (Gramella forsetii).